We begin with the raw amino-acid sequence, 142 residues long: Interleukin-3 (142 aa).

An N-terminal signal peptide occupies residues 1 to 18 (MSHLPILLLLLLVSPGLQ). N-linked (GlcNAc...) asparagine glycosylation is found at Asn-33, Asn-88, and Asn-108. A disulfide bridge links Cys-34 with Cys-102.

Belongs to the IL-3 family. In terms of assembly, monomer. As to expression, activated T-cells, mast cells, natural killer cells.

The protein resides in the secreted. Functionally, granulocyte/macrophage colony-stimulating factors are cytokines that act in hematopoiesis by controlling the production, differentiation, and function of 2 related white cell populations of the blood, the granulocytes and the monocytes-macrophages. Its function is as follows. This CSF induces granulocytes, macrophages, mast cells, stem cells, erythroid cells, eosinophils and megakaryocytes. This Saguinus oedipus (Cotton-top tamarin) protein is Interleukin-3 (IL3).